The chain runs to 1290 residues: Period circadian protein homolog 1 (1290 aa).

A disordered region spans residues 1 to 134 (MSGPLEGADG…SSEQSARART (134 aa)). Residues 1 to 151 (MSGPLEGADG…LRELKLRLPP (151 aa)) are interaction with BTRC. Residues 25-38 (VPSPGPPQHRPCPG) show a composition bias toward pro residues. Low complexity-rich tracts occupy residues 48 to 57 (NSNGSSGNES) and 64 to 115 (GASQ…ASSE). The span at 116-132 (QDNPSTSGCSSEQSARA) shows a compositional bias: polar residues. Threonine 121 bears the Phosphothreonine; by CSNK1E mark. Residues serine 122 and serine 126 each carry the phosphoserine; by CSNK1E modification. The Nuclear export signal 1 motif lies at 138–147 (LMTALRELKL). 2 consecutive PAS domains span residues 208 to 275 (ITSE…PSRL) and 348 to 414 (YEAP…KILQ). Residues 422–465 (HSPIRFCARNGEYVTMDTSWAGFVHPWSRKVAFVLGRHKVRTAP) form the PAC domain. The short motif at 489–498 (LSEQIHRLLL) is the Nuclear export signal 2 element. Disordered stretches follow at residues 508 to 544 (GLCG…PAPV) and 646 to 698 (TTKR…KEPV). 2 stretches are compositionally biased toward low complexity: residues 517 to 533 (SPGP…SNGG) and 652 to 662 (ASSSSYTTSSA). The segment at 596-815 (ELEAGSAPVQ…GLDSSSTAPS (220 aa)) is required for phosphorylation by CSNK1E. 3 positions are modified to phosphoserine: serine 661, serine 663, and serine 704. Disordered stretches follow at residues 749–772 (GLAP…APDA), 805–874 (RGLD…PPAT), and 938–977 (ALQT…FNSR). The span at 751-769 (APGPAPSPAPSPTVAPDPA) shows a compositional bias: pro residues. Position 815 is a phosphoserine (serine 815). The Nuclear localization signal signature appears at 827–843 (APPSRRHHCRSKAKRSR). Over residues 830–847 (SRRHHCRSKAKRSRHHQN) the composition is skewed to basic residues. The span at 860 to 874 (SPVPPSTPWPTPPAT) shows a compositional bias: pro residues. The span at 950 to 961 (ASHSPSPSLPAL) shows a compositional bias: low complexity. Serine 979 and serine 980 each carry phosphoserine. The short motif at 982 to 989 (LQLNLLQL) is the Nuclear export signal 3 element. Residues 996 to 1037 (EGAAVAGGPGSSAGPPPPSAEAAEPEARLAEVTESSNQDALS) are disordered. The short motif at 1043 to 1047 (LELLL) is the LXXLL element. Positions 1051-1062 (SRSGTGSAASGS) are enriched in low complexity. Disordered stretches follow at residues 1051-1098 (SRSG…SKYF) and 1207-1290 (SSTQ…NCTS). Gly residues predominate over residues 1063–1077 (LGSGLGSGSGSGSHE). Residues 1078 to 1095 (GGSTSASITRSSQSSHTS) are compositionally biased toward low complexity. The interval 1149 to 1290 (SRDMTSVLKQ…ALPTAGNCTS (142 aa)) is CRY binding domain. Residues 1236–1248 (GEQGSSGGGSGEG) are compositionally biased toward gly residues.

In terms of assembly, homodimer. Component of the circadian core oscillator, which includes the CRY proteins, CLOCK or NPAS2, BMAL1 or BMAL2, CSNK1D and/or CSNK1E, TIMELESS, and the PER proteins. Interacts directly with TIMELESS, PER2, PER3, CRY1 and CRY2. Interacts with BMAL1 and CLOCK. Interacts with GPRASP1. Interacts (phosphorylated) with BTRC and FBXW11; the interactions trigger proteasomal degradation. Interacts with NONO, WDR5 and SFPQ. Interacts with USP2. Interacts with HNF4A. Phosphorylated on serine residues by CSNK1D, CSNK1E and probably also by CSNK1G2. Phosphorylation by CSNK1D or CSNK1E promotes nuclear location of PER proteins as well as ubiquitination and subsequent degradation. May be dephosphorylated by PP1. Post-translationally, ubiquitinated; requires phosphorylation by CSNK1E and interaction with BTRC and FBXW11. Deubiquitinated by USP2. As to expression, widely expressed. Expressed in hair follicles (at protein level). Found in heart, brain, placenta, lung, liver, skeletal muscle, pancreas, kidney, spleen, thymus, prostate, testis, ovary and small intestine. Highest level in skeletal muscle.

The protein localises to the nucleus. The protein resides in the cytoplasm. Transcriptional repressor which forms a core component of the circadian clock. The circadian clock, an internal time-keeping system, regulates various physiological processes through the generation of approximately 24 hour circadian rhythms in gene expression, which are translated into rhythms in metabolism and behavior. It is derived from the Latin roots 'circa' (about) and 'diem' (day) and acts as an important regulator of a wide array of physiological functions including metabolism, sleep, body temperature, blood pressure, endocrine, immune, cardiovascular, and renal function. Consists of two major components: the central clock, residing in the suprachiasmatic nucleus (SCN) of the brain, and the peripheral clocks that are present in nearly every tissue and organ system. Both the central and peripheral clocks can be reset by environmental cues, also known as Zeitgebers (German for 'timegivers'). The predominant Zeitgeber for the central clock is light, which is sensed by retina and signals directly to the SCN. The central clock entrains the peripheral clocks through neuronal and hormonal signals, body temperature and feeding-related cues, aligning all clocks with the external light/dark cycle. Circadian rhythms allow an organism to achieve temporal homeostasis with its environment at the molecular level by regulating gene expression to create a peak of protein expression once every 24 hours to control when a particular physiological process is most active with respect to the solar day. Transcription and translation of core clock components (CLOCK, NPAS2, BMAL1, BMAL2, PER1, PER2, PER3, CRY1 and CRY2) plays a critical role in rhythm generation, whereas delays imposed by post-translational modifications (PTMs) are important for determining the period (tau) of the rhythms (tau refers to the period of a rhythm and is the length, in time, of one complete cycle). A diurnal rhythm is synchronized with the day/night cycle, while the ultradian and infradian rhythms have a period shorter and longer than 24 hours, respectively. Disruptions in the circadian rhythms contribute to the pathology of cardiovascular diseases, cancer, metabolic syndromes and aging. A transcription/translation feedback loop (TTFL) forms the core of the molecular circadian clock mechanism. Transcription factors, CLOCK or NPAS2 and BMAL1 or BMAL2, form the positive limb of the feedback loop, act in the form of a heterodimer and activate the transcription of core clock genes and clock-controlled genes (involved in key metabolic processes), harboring E-box elements (5'-CACGTG-3') within their promoters. The core clock genes: PER1/2/3 and CRY1/2 which are transcriptional repressors form the negative limb of the feedback loop and interact with the CLOCK|NPAS2-BMAL1|BMAL2 heterodimer inhibiting its activity and thereby negatively regulating their own expression. This heterodimer also activates nuclear receptors NR1D1/2 and RORA/B/G, which form a second feedback loop and which activate and repress BMAL1 transcription, respectively. Regulates circadian target genes expression at post-transcriptional levels, but may not be required for the repression at transcriptional level. Controls PER2 protein decay. Represses CRY2 preventing its repression on CLOCK/BMAL1 target genes such as FXYD5 and SCNN1A in kidney and PPARA in liver. Besides its involvement in the maintenance of the circadian clock, has an important function in the regulation of several processes. Participates in the repression of glucocorticoid receptor NR3C1/GR-induced transcriptional activity by reducing the association of NR3C1/GR to glucocorticoid response elements (GREs) by BMAL1:CLOCK. Plays a role in the modulation of the neuroinflammatory state via the regulation of inflammatory mediators release, such as CCL2 and IL6. In spinal astrocytes, negatively regulates the MAPK14/p38 and MAPK8/JNK MAPK cascades as well as the subsequent activation of NFkappaB. Coordinately regulates the expression of multiple genes that are involved in the regulation of renal sodium reabsorption. Can act as gene expression activator in a gene and tissue specific manner, in kidney enhances WNK1 and SLC12A3 expression in collaboration with CLOCK. Modulates hair follicle cycling. Represses the CLOCK-BMAL1 induced transcription of BHLHE40/DEC1. This Homo sapiens (Human) protein is Period circadian protein homolog 1 (PER1).